We begin with the raw amino-acid sequence, 705 residues long: Bifunctional arginine dihydrolase/ornithine cyclodeaminase ArgZ (705 aa).

The arginine dihydrolase stretch occupies residues 10–269; the sequence is CPPDHYDVDY…GAAKCLTLRV (260 aa). L-arginine is bound by residues asparagine 22, asparagine 71, arginine 90, arginine 139, histidine 168, aspartate 170, alanine 258, and cysteine 264. L-ornithine-binding residues include asparagine 22, asparagine 71, arginine 90, arginine 139, and histidine 168. The active-site Proton donor/acceptor is the histidine 168. Residues alanine 258 and cysteine 264 each contribute to the L-ornithine site. Cysteine 264 (nucleophile) is an active-site residue. The segment at 285–695 is ornithine cyclodeaminase; the sequence is SRVIRMEGHL…SLLVRQLQQL (411 aa). 10 residues coordinate NAD(+): asparagine 525, alanine 526, aspartate 604, serine 636, methionine 637, leucine 638, histidine 639, aspartate 657, aspartate 680, and valine 681.

It in the N-terminal section; belongs to the DDAH family. This sequence in the C-terminal section; belongs to the AgrE/ArgZ ornithine cyclodeaminase family. Homotetramer. NAD(+) serves as cofactor.

The enzyme catalyses L-arginine + 2 H2O + 2 H(+) = L-ornithine + 2 NH4(+) + CO2. The catalysed reaction is L-ornithine = L-proline + NH4(+). Its activity is regulated as follows. Arginine dihydrolase activity does not require a metal cofactor. Functionally, bifunctional enzyme involved in a cyanobacterial arginine utilization pathway that enables cellular adaptation to nitrogen fluctuations. Catalyzes the hydrolysis of arginine to ornithine, with the release of ammonia and carbon dioxide. Then, probably catalyzes the conversion of ornithine to proline, with the release of ammonia. Is highly specific for arginine and cannot hydrolyze citrulline, dimethylarginine and other amino acids. The sequence is that of Bifunctional arginine dihydrolase/ornithine cyclodeaminase ArgZ from Synechocystis sp. (strain ATCC 27184 / PCC 6803 / Kazusa).